The sequence spans 1952 residues: Protein ROS1A (1952 aa).

4 disordered regions span residues 72–157 (EVVG…CRSE), 693–778 (IIRP…ESTS), 1302–1334 (HGTS…DDNV), and 1367–1398 (LIEN…AGKK). 2 stretches are compositionally biased toward basic residues: residues 90-102 (PARK…HRPK) and 130-139 (GKRKYVRKKT). Composition is skewed to basic and acidic residues over residues 709-720 (PRTDNHQVKVSE) and 727-747 (LPEK…EKPK). Over residues 769-778 (TNPLQNESTS) the composition is skewed to polar residues. A compositionally biased stretch (basic residues) spans 1388 to 1398 (AKRPRVGAGKK). 4 residues coordinate [4Fe-4S] cluster: cysteine 1582, cysteine 1589, cysteine 1592, and cysteine 1598.

This sequence belongs to the DNA glycosylase family. DEMETER subfamily. It depends on [4Fe-4S] cluster as a cofactor. Expressed in roots, leaf blades, leaf sheaths, apical and lateral shoot meristems, inflorescence meristems, lodicules, pollen grains, ovules and seeds. Expressed in vascular tissues of roots and leaves, pollen grains, pericarp, aleurone, and starchy endosperm.

Its subcellular location is the nucleus. Its function is as follows. Bifunctional DNA glycosylase/lyase, which excises 5-methylcytosine (5-meC) and 5-hydroxymethylcytosine (5-hmeC), leaving an apyrimidinic (AP) site that is subsequently incised by the lyase activity. DNA demethylase that is indispensable in both male and female gametophyte development. Involved in the regulation of DNA methylation in the promoters of RISBZ1/BZIP58 and DOF3/RPBF, two transcription factors that functions synergistically to positively regulate genes that are key players in the development of aleurone layers. Active DNA demethylation carried out by ROS1A in rice endosperms may restrict the number of aleurone cell layers. This Oryza sativa subsp. japonica (Rice) protein is Protein ROS1A.